A 303-amino-acid polypeptide reads, in one-letter code: Elongation factor Ts (303 aa).

Residues 80 to 83 form an involved in Mg(2+) ion dislocation from EF-Tu region; the sequence is TDFV.

The protein belongs to the EF-Ts family.

The protein localises to the cytoplasm. Its function is as follows. Associates with the EF-Tu.GDP complex and induces the exchange of GDP to GTP. It remains bound to the aminoacyl-tRNA.EF-Tu.GTP complex up to the GTP hydrolysis stage on the ribosome. The sequence is that of Elongation factor Ts from Clostridium perfringens (strain SM101 / Type A).